The primary structure comprises 312 residues: Olfactory receptor 10C1 (312 aa).

Residues Met-1 to Gly-24 are Extracellular-facing. N-linked (GlcNAc...) asparagine glycosylation occurs at Asn-4. Residues Leu-25–Val-45 traverse the membrane as a helical segment. Residues Val-46–Ala-53 lie on the Cytoplasmic side of the membrane. A helical membrane pass occupies residues Leu-54–Ser-74. The Extracellular segment spans residues Val-75 to Leu-98. An intrachain disulfide couples Cys-96 to Cys-188. Residues Gln-99 to Tyr-119 form a helical membrane-spanning segment. Residues Asp-120–Arg-138 lie on the Cytoplasmic side of the membrane. The chain crosses the membrane as a helical span at residues Val-139 to Thr-159. Over Pro-160–Leu-196 the chain is Extracellular. Residues Gln-197 to Ser-216 traverse the membrane as a helical segment. Residues Tyr-217–Ala-236 lie on the Cytoplasmic side of the membrane. The helical transmembrane segment at Phe-237–Ile-257 threads the bilayer. The Extracellular segment spans residues Tyr-258–Asp-270. A helical transmembrane segment spans residues Pro-271–Leu-291. Topologically, residues Arg-292–Ile-312 are cytoplasmic.

Belongs to the G-protein coupled receptor 1 family.

It is found in the cell membrane. Odorant receptor. In Homo sapiens (Human), this protein is Olfactory receptor 10C1 (OR10C1).